The following is a 412-amino-acid chain: Lipoyl synthase, mitochondrial (412 aa).

Residues Cys-127, Cys-132, Cys-138, Cys-159, Cys-163, Cys-166, and Ser-375 each coordinate [4Fe-4S] cluster. Residues 142 to 364 (SDDEGTATAT…EKEAMDMGFL (223 aa)) enclose the Radical SAM core domain.

It belongs to the radical SAM superfamily. Lipoyl synthase family. It depends on [4Fe-4S] cluster as a cofactor.

The protein localises to the mitochondrion. The enzyme catalyses [[Fe-S] cluster scaffold protein carrying a second [4Fe-4S](2+) cluster] + N(6)-octanoyl-L-lysyl-[protein] + 2 oxidized [2Fe-2S]-[ferredoxin] + 2 S-adenosyl-L-methionine + 4 H(+) = [[Fe-S] cluster scaffold protein] + N(6)-[(R)-dihydrolipoyl]-L-lysyl-[protein] + 4 Fe(3+) + 2 hydrogen sulfide + 2 5'-deoxyadenosine + 2 L-methionine + 2 reduced [2Fe-2S]-[ferredoxin]. Its pathway is protein modification; protein lipoylation via endogenous pathway; protein N(6)-(lipoyl)lysine from octanoyl-[acyl-carrier-protein]: step 2/2. Functionally, catalyzes the radical-mediated insertion of two sulfur atoms into the C-6 and C-8 positions of the octanoyl moiety bound to the lipoyl domains of lipoate-dependent enzymes, thereby converting the octanoylated domains into lipoylated derivatives. This chain is Lipoyl synthase, mitochondrial, found in Leishmania infantum.